We begin with the raw amino-acid sequence, 62 residues long: DNA-directed RNA polymerase subunit Rpo10 (62 aa).

Zn(2+)-binding residues include Cys-6, Cys-9, Cys-43, and Cys-44.

It belongs to the archaeal Rpo10/eukaryotic RPB10 RNA polymerase subunit family. Part of the RNA polymerase complex. The cofactor is Zn(2+).

Its subcellular location is the cytoplasm. The enzyme catalyses RNA(n) + a ribonucleoside 5'-triphosphate = RNA(n+1) + diphosphate. In terms of biological role, DNA-dependent RNA polymerase (RNAP) catalyzes the transcription of DNA into RNA using the four ribonucleoside triphosphates as substrates. The protein is DNA-directed RNA polymerase subunit Rpo10 of Methanospirillum hungatei JF-1 (strain ATCC 27890 / DSM 864 / NBRC 100397 / JF-1).